Consider the following 578-residue polypeptide: MLRRLDKIRFRGHKRDDFLDLAESPNASDTECSDEIPLKVPRTSPRDSEELRDPAGPGTLIMATGVQDFNRTEFDRLNEIKGHLEIALLEKHFLQEELRKLREETNAEMLRQELDRERQRRMELEQKVQEVLKARTEEQMAQQPPKGQAQASNGAERRSQGLSSRLQKWFYERFGEYVEDFRFQPEENTVETEEPLSARRLTENMRRLKRGAKPVTNFVKNLSALSDWYSVYTSAIAFTVYMNAVWHGWAIPLFLFLAILRLSLNYLIARGWRIQWSIVPEVSEPVEPPKEDLTVSEKFQLVLDVAQKAQNLFGKMADILEKIKNLFMWVQPEITQKLYVALWAAFLASCFFPYRLVGLAVGLYAGIKFFLIDFIFKRCPRLRAKYDTPYIIWRSLPTDPQLKERSSAAVSRRLQTTSSRSYVPSAPAGLGKEEDAGRFHSTKKGNFHEIFNLTENERPLAVCENGWRCCLINRDRKMPTDYIRNGVLYVTENYLCFESSKSGSSKRNKVIKLVDITDIQKYKVLSVLPGSGMGIAVSTPSTQKPLVFGAMVHRDEAFETILSQYIKITSAAASGGDS.

Disordered regions lie at residues 23 to 58 (ESPNASDTECSDEIPLKVPRTSPRDSEELRDPAGPG) and 136 to 159 (TEEQMAQQPPKGQAQASNGAERRS). Residues S24 and S28 each carry the phosphoserine modification. Positions 44-53 (SPRDSEELRD) are enriched in basic and acidic residues. Residues 83 to 143 (HLEIALLEKH…ARTEEQMAQQ (61 aa)) adopt a coiled-coil conformation. 3 helical membrane passes run 240-260 (VYMNAVWHGWAIPLFLFLAIL), 334-354 (ITQKLYVALWAAFLASCFFPY), and 356-376 (LVGLAVGLYAGIKFFLIDFIF). Positions 415 to 435 (QTTSSRSYVPSAPAGLGKEED) are disordered. Residues 445 to 523 (GNFHEIFNLT…VDITDIQKYK (79 aa)) enclose the GRAM domain.

In terms of assembly, interacts with RTN4 (isoform B). As to expression, expressed in lung and in primary lung squamous cell carcinoma (LSCC).

Its subcellular location is the mitochondrion membrane. It is found in the endoplasmic reticulum membrane. Its function is as follows. Plays a role as a mediator of E2F1-induced apoptosis in the absence of p53/TP53. Plays a role as a mediator of E2F1-induced apoptosis in the absence of p53/TP53. Inhibits TLR9 response to nucelic acids and regulates TLR9-mediated innate immune response. This chain is GRAM domain-containing protein 4, found in Homo sapiens (Human).